A 292-amino-acid polypeptide reads, in one-letter code: Probable xyloglucan endotransglucosylase/hydrolase protein 6 (292 aa).

The first 30 residues, 1–30 (MAKIYSPSFPGTLCLCIFTLLTLMFIRVSA), serve as a signal peptide directing secretion. The region spanning 31–224 (RPATFVEDFK…WSKAPFYAYY (194 aa)) is the GH16 domain. Glutamate 110 acts as the Nucleophile in catalysis. Glutamate 114 functions as the Proton donor in the catalytic mechanism. Glutamate 114 is a xyloglucan binding site. Asparagine 118 carries N-linked (GlcNAc...) asparagine glycosylation. Xyloglucan is bound by residues 127 to 129 (QTN), 137 to 139 (DRE), 203 to 204 (DW), and glycine 208. Disulfide bonds link cysteine 232/cysteine 240 and cysteine 277/cysteine 290. Residue arginine 282 coordinates xyloglucan.

This sequence belongs to the glycosyl hydrolase 16 family. XTH group 1 subfamily. In terms of processing, contains at least one intrachain disulfide bond essential for its enzymatic activity.

It localises to the secreted. Its subcellular location is the cell wall. The protein resides in the extracellular space. The protein localises to the apoplast. It catalyses the reaction breaks a beta-(1-&gt;4) bond in the backbone of a xyloglucan and transfers the xyloglucanyl segment on to O-4 of the non-reducing terminal glucose residue of an acceptor, which can be a xyloglucan or an oligosaccharide of xyloglucan.. Catalyzes xyloglucan endohydrolysis (XEH) and/or endotransglycosylation (XET). Cleaves and religates xyloglucan polymers, an essential constituent of the primary cell wall, and thereby participates in cell wall construction of growing tissues. The polypeptide is Probable xyloglucan endotransglucosylase/hydrolase protein 6 (XTH6) (Arabidopsis thaliana (Mouse-ear cress)).